We begin with the raw amino-acid sequence, 397 residues long: Succinate--CoA ligase [ADP-forming] subunit beta (397 aa).

Positions 9–254 constitute an ATP-grasp domain; sequence KALLKGYGAP…ETEEDAKEIE (246 aa). ATP is bound by residues lysine 46, 53–55, glutamate 109, alanine 112, and glutamate 117; that span reads GRG. The Mg(2+) site is built by asparagine 209 and aspartate 223. Substrate is bound by residues asparagine 274 and 331–333; that span reads GIM.

Belongs to the succinate/malate CoA ligase beta subunit family. As to quaternary structure, heterotetramer of two alpha and two beta subunits. It depends on Mg(2+) as a cofactor.

The catalysed reaction is succinate + ATP + CoA = succinyl-CoA + ADP + phosphate. It catalyses the reaction GTP + succinate + CoA = succinyl-CoA + GDP + phosphate. Its pathway is carbohydrate metabolism; tricarboxylic acid cycle; succinate from succinyl-CoA (ligase route): step 1/1. Succinyl-CoA synthetase functions in the citric acid cycle (TCA), coupling the hydrolysis of succinyl-CoA to the synthesis of either ATP or GTP and thus represents the only step of substrate-level phosphorylation in the TCA. The beta subunit provides nucleotide specificity of the enzyme and binds the substrate succinate, while the binding sites for coenzyme A and phosphate are found in the alpha subunit. This is Succinate--CoA ligase [ADP-forming] subunit beta from Rhizobium etli (strain ATCC 51251 / DSM 11541 / JCM 21823 / NBRC 15573 / CFN 42).